Reading from the N-terminus, the 607-residue chain is ATP-dependent DNA helicase II subunit 1 (607 aa).

The region spanning 241–452 is the Ku domain; that stretch reads MDLGNDVRIG…IETMQRILRG (212 aa). Residues 570 to 604 enclose the SAP domain; that stretch reads IKALKVSQLKDILRDRGLRVSGKKADLLDNLTNYV.

This sequence belongs to the ku70 family. As to quaternary structure, heterodimer of pku70 and pku80.

Its subcellular location is the nucleus. The protein localises to the chromosome. It localises to the telomere. The enzyme catalyses ATP + H2O = ADP + phosphate + H(+). Single-stranded DNA-dependent ATP-dependent helicase. Involved in non-homologous end joining (NHEJ) DNA double strand break repair. DNA-binding is sequence-independent but has a high affinity to nicks in double-stranded DNA and to the ends of duplex DNA. Binds to naturally occurring chromosomal ends, and therefore provides chromosomal end protection. Required also for telomere recombination to repair telomeric ends in the absence of telomerase. ku70, of the ku70/ku80 heterodimer, binds to the stem loop of tlc1, the RNA component of telomerase. Required for mating-type switching. Involved in telomere maintenance. Interacts with telomeric repeats and subtelomeric sequences thereby controlling telomere length and protecting against subtelomeric rearrangement. Maintains telomeric chromatin, which is involved in silencing the expression of genes located at the telomere. This is ATP-dependent DNA helicase II subunit 1 (pku70) from Schizosaccharomyces pombe (strain 972 / ATCC 24843) (Fission yeast).